The chain runs to 536 residues: Bifunctional purine biosynthesis protein PurH (536 aa).

An MGS-like domain is found at 8–158; it reads IPAPDEVRIQ…KNHAYVTIVT (151 aa).

It belongs to the PurH family.

The enzyme catalyses (6R)-10-formyltetrahydrofolate + 5-amino-1-(5-phospho-beta-D-ribosyl)imidazole-4-carboxamide = 5-formamido-1-(5-phospho-D-ribosyl)imidazole-4-carboxamide + (6S)-5,6,7,8-tetrahydrofolate. It catalyses the reaction IMP + H2O = 5-formamido-1-(5-phospho-D-ribosyl)imidazole-4-carboxamide. Its pathway is purine metabolism; IMP biosynthesis via de novo pathway; 5-formamido-1-(5-phospho-D-ribosyl)imidazole-4-carboxamide from 5-amino-1-(5-phospho-D-ribosyl)imidazole-4-carboxamide (10-formyl THF route): step 1/1. It participates in purine metabolism; IMP biosynthesis via de novo pathway; IMP from 5-formamido-1-(5-phospho-D-ribosyl)imidazole-4-carboxamide: step 1/1. The sequence is that of Bifunctional purine biosynthesis protein PurH from Sinorhizobium fredii (strain NBRC 101917 / NGR234).